The sequence spans 247 residues: 2,3-bisphosphoglycerate-dependent phosphoglycerate mutase (247 aa).

Substrate contacts are provided by residues 8 to 15 (RHGESVWN), 21 to 22 (TG), Arg-60, 87 to 90 (ERHY), Lys-98, 114 to 115 (RR), and 183 to 184 (GN). His-9 functions as the Tele-phosphohistidine intermediate in the catalytic mechanism. Glu-87 serves as the catalytic Proton donor/acceptor.

The protein belongs to the phosphoglycerate mutase family. BPG-dependent PGAM subfamily. Homodimer.

The enzyme catalyses (2R)-2-phosphoglycerate = (2R)-3-phosphoglycerate. The protein operates within carbohydrate degradation; glycolysis; pyruvate from D-glyceraldehyde 3-phosphate: step 3/5. In terms of biological role, catalyzes the interconversion of 2-phosphoglycerate and 3-phosphoglycerate. This Geobacter sulfurreducens (strain ATCC 51573 / DSM 12127 / PCA) protein is 2,3-bisphosphoglycerate-dependent phosphoglycerate mutase.